We begin with the raw amino-acid sequence, 1007 residues long: Rho-type GTPase-activating protein 1 (1007 aa).

LIM zinc-binding domains follow at residues 13-66 (CVRC…CFDC) and 70-122 (CKNC…CLSC). Disordered stretches follow at residues 203–293 (ITGY…KSPS), 401–478 (EKYS…STSL), and 505–600 (KETA…NDPS). A compositionally biased stretch (low complexity) spans 212–221 (NSGSSKFGSN). 2 stretches are compositionally biased toward polar residues: residues 250–261 (ANMSLNVATDPT) and 270–293 (HSRN…KSPS). Thr278 carries the phosphothreonine modification. Residue Ser291 is modified to Phosphoserine. The span at 411-421 (KGRKISRSLSR) shows a compositional bias: basic residues. Positions 454-466 (RSQDLMRDNDSHT) are enriched in basic and acidic residues. Polar residues-rich tracts occupy residues 467-478 (GLDTPNSNSTSL) and 529-579 (SPAT…LENS). Thr532 bears the Phosphothreonine mark. A compositionally biased stretch (basic and acidic residues) spans 583–600 (EEQKETLYENSESRNDPS). The region spanning 791–1006 (SSLVARCNYE…FIFGNYKDIL (216 aa)) is the Rho-GAP domain.

In terms of biological role, GTPase-activating protein (GAP) for CDC42 and/or RHO1. Negative regulator of the pheromone-response pathway through the STE20 protein kinase; acts at a step between the G-protein and the MAP kinase module. Dominant suppressor of bud emergence defect caused by deletion of IPL2/BEM2. Involved in the control of polarized cell growth and proper bud site selection. The polypeptide is Rho-type GTPase-activating protein 1 (RGA1) (Saccharomyces cerevisiae (strain ATCC 204508 / S288c) (Baker's yeast)).